The chain runs to 302 residues: Nucleotide-binding protein Rsph17029_0317 (302 aa).

15–22 serves as a coordination point for ATP; it reads GPSGAGRT. 62-65 is a binding site for GTP; it reads DVRN.

This sequence belongs to the RapZ-like family.

Its function is as follows. Displays ATPase and GTPase activities. The protein is Nucleotide-binding protein Rsph17029_0317 of Cereibacter sphaeroides (strain ATCC 17029 / ATH 2.4.9) (Rhodobacter sphaeroides).